The sequence spans 1060 residues: RNA-binding protein 27 (1060 aa).

Composition is skewed to basic and acidic residues over residues 91-102 and 124-143; these read LVQEKEEIKEEV and TRSE…DGKW. Disordered stretches follow at residues 91-143 and 162-235; these read LVQE…DGKW and WRRG…GAQS. Over residues 165–185 the composition is skewed to basic residues; that stretch reads GRSKSRSKSRGLSRSRSRSRG. Positions 186 to 211 are enriched in basic and acidic residues; sequence RSKDRDPNRNVEHRERSKFKSERNDL. A compositionally biased stretch (polar residues) spans 225-235; the sequence is SSEQYSSGAQS. The segment at 273–301 adopts a C3H1-type zinc-finger fold; sequence LPPKRRCRDYDERGFCVLGDLCQFDHGND. 2 stretches are compositionally biased toward pro residues: residues 319–356 and 371–384; these read PPPG…PGPG and QPPP…PRPP. The interval 319–412 is disordered; that stretch reads PPPGLPPPPP…PNLASVGTRL (94 aa). Over residues 386–402 the composition is skewed to polar residues; sequence TQSSLINSRDQPGTSAV. Thr-447 carries the phosphothreonine modification. Residue Arg-455 is modified to Omega-N-methylarginine. A disordered region spans residues 565–592; the sequence is MSGLEGPLTKKPWLGKQGNNNQNKPGFL. Residues 579-588 show a composition bias toward low complexity; sequence GKQGNNNQNK. Positions 600-674 constitute an RRM domain; it reads TKLEVKKIPQ…RFIRVLWHRE (75 aa). The stretch at 809–886 forms a coiled coil; sequence VQEVLKKKQE…KDELKTSSAV (78 aa). The residue at position 927 (Ser-927) is a Phosphoserine. Disordered stretches follow at residues 940–968 and 1006–1060; these read PVGR…SLNH and DRRL…SWRR. Residues Ser-1012 and Ser-1020 each carry the phosphoserine modification. The span at 1024-1053 shows a compositional bias: acidic residues; the sequence is ETEEEEVKEEETETSDLFLPDDDDEDEDEY.

The protein localises to the cytoplasm. It is found in the nucleus speckle. In terms of biological role, may be involved in the turnover of nuclear polyadenylated (pA+) RNA. This Homo sapiens (Human) protein is RNA-binding protein 27.